The following is an 83-amino-acid chain: MMGKHIQLSFAILIMFTIFVLGAVGDVDQGYKQQCYKTIDVNLCVTGECKKMCVRRFKQAAGMCIKSVPSAPAPNRCRCIYHC.

Positions 1 to 25 (MMGKHIQLSFAILIMFTIFVLGAVG) are cleaved as a signal peptide. 4 disulfide bridges follow: Cys35/Cys83, Cys44/Cys64, Cys49/Cys77, and Cys53/Cys79.

Belongs to the DEFL family.

Its subcellular location is the secreted. This Arabidopsis thaliana (Mouse-ear cress) protein is Putative defensin-like protein 150 (LCR32).